The chain runs to 287 residues: Nucleoid occlusion protein (287 aa).

Residues 146–165 (EALAQRVGKSQSAIANKMRL) constitute a DNA-binding region (H-T-H motif).

Belongs to the ParB family.

It is found in the cytoplasm. It localises to the nucleoid. Effects nucleoid occlusion by binding relatively nonspecifically to DNA and preventing the assembly of the division machinery in the vicinity of the nucleoid, especially under conditions that disturb the cell cycle. It helps to coordinate cell division and chromosome segregation by preventing the formation of the Z ring through the nucleoid, which would cause chromosome breakage. The polypeptide is Nucleoid occlusion protein (Listeria monocytogenes serotype 4a (strain HCC23)).